Reading from the N-terminus, the 126-residue chain is Acidic phospholipase A2 2 (126 aa).

Residues 1-7 constitute a propeptide that is removed on maturation; sequence SNRPMPL. 7 disulfide bridges follow: C18–C78, C33–C125, C35–C51, C50–C106, C57–C99, C67–C92, and C85–C97. Ca(2+) is bound by residues Y34, G36, and G38. The active site involves H54. Residue D55 coordinates Ca(2+). Residue D100 is part of the active site.

The protein belongs to the phospholipase A2 family. Group I subfamily. D49 sub-subfamily. As to quaternary structure, heterodimer formed between two homologous isoforms: isoform 1 and isoform 2. It depends on Ca(2+) as a cofactor. As to expression, expressed by the venom gland.

It localises to the secreted. The catalysed reaction is a 1,2-diacyl-sn-glycero-3-phosphocholine + H2O = a 1-acyl-sn-glycero-3-phosphocholine + a fatty acid + H(+). PLA2 catalyzes the calcium-dependent hydrolysis of the 2-acyl groups in 3-sn-phosphoglycerides. The polypeptide is Acidic phospholipase A2 2 (Naja sagittifera (Andaman cobra)).